A 95-amino-acid polypeptide reads, in one-letter code: Protein TusB (95 aa).

The protein belongs to the DsrH/TusB family. Heterohexamer, formed by a dimer of trimers. The hexameric TusBCD complex contains 2 copies each of TusB, TusC and TusD. The TusBCD complex interacts with TusE.

Its subcellular location is the cytoplasm. In terms of biological role, part of a sulfur-relay system required for 2-thiolation of 5-methylaminomethyl-2-thiouridine (mnm(5)s(2)U) at tRNA wobble positions. In Serratia proteamaculans (strain 568), this protein is Protein TusB.